Here is a 1148-residue protein sequence, read N- to C-terminus: Protein pianissimo A (1148 aa).

Residues 1–34 (MTSSDSSVNTTSSSFGNISISSPNHSSSTPPLNN) show a composition bias toward low complexity. The tract at residues 1 to 41 (MTSSDSSVNTTSSSFGNISISSPNHSSSTPPLNNGNGNNVS) is disordered. Residues 803 to 914 (KVSALSLNVL…STSGVYLPPH (112 aa)) enclose the N-terminal Ras-GEF domain.

Belongs to the RICTOR family. In terms of assembly, part of a complex, TORC2, consisting of tor, lst8, piaA and ripA. Additional proteins, such as 14-3-3 and heat-shock proteins, may also belong to the TORC2 complex.

The protein localises to the cytoplasm. Regulates cell growth, chemotaxis, signal relay and the actin cytoskeleton. Required for chemoattractant receptor and G protein-mediated activation of the 12 transmembrane domain adenylyl cyclase. Functions as a part of protein complex TORC2. TORC2, is presumed to be indirectly negatively modulated by rapamycin and regulates actin polarization. TORC2, but not TORC1, negatively regulates phagocytosis. This protein and dagA protein CRAC, a cytosolic regulator, are both essential for activation of the enzyme adenylyl cyclase. This protein and CRAC do not function redundantly. Both proteins are integral components of the adenylyl cyclase activation pathway. This Dictyostelium discoideum (Social amoeba) protein is Protein pianissimo A (piaA).